We begin with the raw amino-acid sequence, 360 residues long: DNA replication and repair protein RecF (360 aa).

30 to 37 lines the ATP pocket; the sequence is GHNGSGKT.

This sequence belongs to the RecF family.

Its subcellular location is the cytoplasm. Its function is as follows. The RecF protein is involved in DNA metabolism; it is required for DNA replication and normal SOS inducibility. RecF binds preferentially to single-stranded, linear DNA. It also seems to bind ATP. The chain is DNA replication and repair protein RecF from Actinobacillus pleuropneumoniae serotype 5b (strain L20).